Reading from the N-terminus, the 250-residue chain is 5-oxoprolinase subunit A (250 aa).

Belongs to the LamB/PxpA family. Forms a complex composed of PxpA, PxpB and PxpC.

The enzyme catalyses 5-oxo-L-proline + ATP + 2 H2O = L-glutamate + ADP + phosphate + H(+). Its function is as follows. Catalyzes the cleavage of 5-oxoproline to form L-glutamate coupled to the hydrolysis of ATP to ADP and inorganic phosphate. This Streptomyces griseus subsp. griseus (strain JCM 4626 / CBS 651.72 / NBRC 13350 / KCC S-0626 / ISP 5235) protein is 5-oxoprolinase subunit A.